We begin with the raw amino-acid sequence, 493 residues long: Tripartite motif-containing protein 5 (493 aa).

An N-acetylalanine modification is found at Ala-2. An RING-type zinc finger spans residues 15–59; it reads CPICLELLTQPLSLDCGHSFCQACLTANHKKSTLDKGERSCPVCR. Ser-86 carries the phosphoserine modification. The segment at 90-132 adopts a B box-type zinc-finger fold; it reads QKVDHCARHGEKLLLFCKEDGKVICWLCERSQEHRGHHTFLTE. Positions 95, 98, 117, and 123 each coordinate Zn(2+). The stretch at 131–223 forms a coiled coil; the sequence is TEEVAQKYQV…LTKSETEMVQ (93 aa). The tract at residues 185 to 198 is required for interaction with GABARAP and for autophagy; that stretch reads FEQLRDILDWEESN. In terms of domain architecture, B30.2/SPRY spans 281-493; it reads LKGMLEVFRE…VPMTLCSPSS (213 aa).

The protein belongs to the TRIM/RBCC family. Can form homodimers and homotrimers. In addition to lower-order dimerization, also exhibits a higher-order multimerization and both low- and high-order multimerizations are essential for its restriction activity. Interacts with BTBD1 and BTBD2. Interacts with PSMC4, PSMC5, PSMD7 and HSPA8/HSC70. Interacts (via B30.2/SPRY domain) with HSPA1A/B. Interacts with PSMC2, MAP3K7/TAK1, TAB2 and TAB3. Interacts with SQSTM1. Interacts with TRIM6 and TRIM34. Interacts with ULK1 (phosphorylated form), GABARAP, GABARAPL1, GABARAPL2, MAP1LC3A, MAP1LC3C and BECN1. In terms of processing, degraded in a proteasome-independent fashion in the absence of viral infection but in a proteasome-dependent fashion following exposure to restriction sensitive virus. Post-translationally, autoubiquitinated in a RING finger- and UBE2D2-dependent manner. Monoubiquitinated by TRIM21. Deubiquitinated by Yersinia YopJ. Ubiquitination may not lead to proteasomal degradation.

The protein localises to the cytoplasm. It is found in the nucleus. It catalyses the reaction S-ubiquitinyl-[E2 ubiquitin-conjugating enzyme]-L-cysteine + [acceptor protein]-L-lysine = [E2 ubiquitin-conjugating enzyme]-L-cysteine + N(6)-ubiquitinyl-[acceptor protein]-L-lysine.. The protein operates within protein modification; protein ubiquitination. Capsid-specific restriction factor that prevents infection from non-host-adapted retroviruses. Blocks viral replication early in the life cycle, after viral entry but before reverse transcription. In addition to acting as a capsid-specific restriction factor, also acts as a pattern recognition receptor that activates innate immune signaling in response to the retroviral capsid lattice. Binding to the viral capsid triggers its E3 ubiquitin ligase activity, and in concert with the heterodimeric ubiquitin conjugating enzyme complex UBE2V1-UBE2N (also known as UBC13-UEV1A complex) generates 'Lys-63'-linked polyubiquitin chains, which in turn are catalysts in the autophosphorylation of the MAP3K7/TAK1 complex (includes TAK1, TAB2, and TAB3). Activation of the MAP3K7/TAK1 complex by autophosphorylation results in the induction and expression of NF-kappa-B and MAPK-responsive inflammatory genes, thereby leading to an innate immune response in the infected cell. Plays a role in regulating autophagy through activation of autophagy regulator BECN1 by causing its dissociation from its inhibitors BCL2 and TAB2. This chain is Tripartite motif-containing protein 5 (TRIM5), found in Pongo pygmaeus (Bornean orangutan).